The chain runs to 211 residues: Putative 3-methyladenine DNA glycosylase (211 aa).

It belongs to the DNA glycosylase MPG family.

The protein is Putative 3-methyladenine DNA glycosylase of Granulibacter bethesdensis (strain ATCC BAA-1260 / CGDNIH1).